Here is a 60-residue protein sequence, read N- to C-terminus: Large ribosomal subunit protein bL32 (60 aa).

Residues 1-20 are compositionally biased toward basic residues; it reads MAKPARHTSKAKRNKRRTHY. Residues 1-22 are disordered; the sequence is MAKPARHTSKAKRNKRRTHYKL.

It belongs to the bacterial ribosomal protein bL32 family.

In Streptococcus agalactiae serotype V (strain ATCC BAA-611 / 2603 V/R), this protein is Large ribosomal subunit protein bL32.